A 400-amino-acid chain; its full sequence is Multiphosphoryl transfer protein (400 aa).

The 141-residue stretch at 2 to 142 (LELTTQDIQL…QQIIAIIKGE (141 aa)) folds into the PTS EIIA type-2 domain. H62 serves as the catalytic Tele-phosphohistidine intermediate; for EIIA activity. Position 62 is a phosphohistidine; by HPr (H62). The HPr domain occupies 310–400 (AHTATFRIKN…VAINAGLGEG (91 aa)). Residue H324 is the Pros-phosphohistidine intermediate; for HPr activity of the active site. H324 carries the phosphohistidine; by EI modification.

The protein localises to the cytoplasm. Functionally, the phosphoenolpyruvate-dependent sugar phosphotransferase system (sugar PTS), a major carbohydrate active transport system, catalyzes the phosphorylation of incoming sugar substrates concomitantly with their translocation across the cell membrane. The enzyme II FruAB PTS system is involved in fructose transport. This chain is Multiphosphoryl transfer protein, found in Vibrio cholerae serotype O1 (strain ATCC 39315 / El Tor Inaba N16961).